Here is a 122-residue protein sequence, read N- to C-terminus: Large ribosomal subunit protein bL19 (122 aa).

The protein belongs to the bacterial ribosomal protein bL19 family.

In terms of biological role, this protein is located at the 30S-50S ribosomal subunit interface and may play a role in the structure and function of the aminoacyl-tRNA binding site. This chain is Large ribosomal subunit protein bL19, found in Chlamydia felis (strain Fe/C-56) (Chlamydophila felis).